A 626-amino-acid chain; its full sequence is UvrABC system protein C (626 aa).

In terms of domain architecture, GIY-YIG spans 20-97 (ECSGVYKMLD…IKKFQPKFNI (78 aa)). The UVR domain occupies 207–242 (IALQANLSKKMQELSSQMRFEEAAEIRDRIKALSYV).

The protein belongs to the UvrC family. As to quaternary structure, interacts with UvrB in an incision complex.

The protein localises to the cytoplasm. The UvrABC repair system catalyzes the recognition and processing of DNA lesions. UvrC both incises the 5' and 3' sides of the lesion. The N-terminal half is responsible for the 3' incision and the C-terminal half is responsible for the 5' incision. The sequence is that of UvrABC system protein C from Rickettsia prowazekii (strain Madrid E).